Here is a 204-residue protein sequence, read N- to C-terminus: MKEEKTMLKIITLGDSNVGKTSLFYHYVNGEYRYNRPPSIGPDYFIKELKVENKHVFLMVWDTCGQERFQAFSPPYFRGANCYTLCFDIHNEESFINLGKWMDEIIKYCYGNIPFVLVGTKSDIPRTDKSISKARIEQWCKNIEDQGIIDKVHYFETSAKLSQNVTELYNVAAKLALEHYSIVKYISIIRPIGPPEEVKVGTCC.

14–21 (GDSNVGKT) contributes to the GTP binding site. The short motif at 36–44 (RPPSIGPDY) is the Effector region element. Residues 62 to 66 (DTCGQ) and 120 to 123 (TKSD) each bind GTP. 2 S-geranylgeranyl cysteine lipidation sites follow: Cys203 and Cys204.

It belongs to the small GTPase superfamily. Rab family.

Its subcellular location is the cell membrane. This Dictyostelium discoideum (Social amoeba) protein is Ras-related protein RabL (rabL).